The primary structure comprises 98 residues: Co-chaperonin GroES (98 aa).

The protein belongs to the GroES chaperonin family. In terms of assembly, heptamer of 7 subunits arranged in a ring. Interacts with the chaperonin GroEL.

It localises to the cytoplasm. In terms of biological role, together with the chaperonin GroEL, plays an essential role in assisting protein folding. The GroEL-GroES system forms a nano-cage that allows encapsulation of the non-native substrate proteins and provides a physical environment optimized to promote and accelerate protein folding. GroES binds to the apical surface of the GroEL ring, thereby capping the opening of the GroEL channel. The chain is Co-chaperonin GroES from Brucella abortus (strain S19).